Here is a 268-residue protein sequence, read N- to C-terminus: Embryonic abundant protein USP92 (268 aa).

An N-terminal signal peptide occupies residues 1–22; that stretch reads MEFAHLTVLSLFCLAFVGITAT. 5 tandem repeats follow at residues 50 to 55, 83 to 88, 101 to 106, 166 to 183, and 202 to 222. Residues 50–106 are 3 X 6 AA approximate repeats; sequence GKTNSLPIKSEELKQYSTLFFEHDLHPRKNFILGNTNSVGSIIRPFTKSRQGVTDSI. One can recognise a BURP domain in the interval 68 to 259; it reads LFFEHDLHPR…GNKAAAWVPN (192 aa). Residues 166–222 are 2 X approximate repeats; the sequence is YVVEDVKKVGDNAVMCHRLNFEKVVFNCHQVRETTAYVVSLVASDGTKTKALTVCHH. N-linked (GlcNAc...) asparagine glycosylation occurs at Asn-259.

As to expression, seed.

The chain is Embryonic abundant protein USP92 from Vicia faba (Broad bean).